Here is a 275-residue protein sequence, read N- to C-terminus: Large ribosomal subunit protein uL2 (275 aa).

Residues 28 to 38 (RPYDGLLEKKS) are compositionally biased toward basic and acidic residues. Disordered regions lie at residues 28–58 (RPYDGLLEKKSKSGGRNNNGRITTRHVGGGH) and 223–275 (VAMN…RKAK). Basic residues predominate over residues 254 to 275 (KGHKTRKNKRTDKLIVRRRKAK).

This sequence belongs to the universal ribosomal protein uL2 family. As to quaternary structure, part of the 50S ribosomal subunit. Forms a bridge to the 30S subunit in the 70S ribosome.

In terms of biological role, one of the primary rRNA binding proteins. Required for association of the 30S and 50S subunits to form the 70S ribosome, for tRNA binding and peptide bond formation. It has been suggested to have peptidyltransferase activity; this is somewhat controversial. Makes several contacts with the 16S rRNA in the 70S ribosome. This is Large ribosomal subunit protein uL2 from Chromohalobacter salexigens (strain ATCC BAA-138 / DSM 3043 / CIP 106854 / NCIMB 13768 / 1H11).